Here is a 147-residue protein sequence, read N- to C-terminus: uncharacterized protein (147 aa).

To M.pneumoniae MPN_465.

This is an uncharacterized protein from Mycoplasma pneumoniae (strain ATCC 29342 / M129 / Subtype 1) (Mycoplasmoides pneumoniae).